A 436-amino-acid chain; its full sequence is Hydrogenobyrinate a,c-diamide synthase (436 aa).

The GATase cobBQ-type domain occupies 244–435 (RIAVARDDAF…MHVIDFSGEA (192 aa)). The active-site Nucleophile is the cysteine 327.

It belongs to the CobB/CbiA family. The cofactor is Mg(2+).

The enzyme catalyses hydrogenobyrinate + 2 L-glutamine + 2 ATP + 2 H2O = hydrogenobyrinate a,c-diamide + 2 L-glutamate + 2 ADP + 2 phosphate + 2 H(+). The protein operates within cofactor biosynthesis; adenosylcobalamin biosynthesis; cob(II)yrinate a,c-diamide from precorrin-2 (aerobic route): step 9/10. In terms of biological role, catalyzes the ATP-dependent amidation of the two carboxylate groups at positions a and c of hydrogenobyrinate, using either L-glutamine or ammonia as the nitrogen source. This chain is Hydrogenobyrinate a,c-diamide synthase, found in Brucella abortus biovar 1 (strain 9-941).